A 441-amino-acid polypeptide reads, in one-letter code: ATP-dependent protease ATPase subunit HslU (441 aa).

ATP-binding positions include Val18, 60-65, Asp253, Glu319, and Arg391; that span reads GVGKTE.

It belongs to the ClpX chaperone family. HslU subfamily. A double ring-shaped homohexamer of HslV is capped on each side by a ring-shaped HslU homohexamer. The assembly of the HslU/HslV complex is dependent on binding of ATP.

It is found in the cytoplasm. Functionally, ATPase subunit of a proteasome-like degradation complex; this subunit has chaperone activity. The binding of ATP and its subsequent hydrolysis by HslU are essential for unfolding of protein substrates subsequently hydrolyzed by HslV. HslU recognizes the N-terminal part of its protein substrates and unfolds these before they are guided to HslV for hydrolysis. This chain is ATP-dependent protease ATPase subunit HslU, found in Nitratidesulfovibrio vulgaris (strain DP4) (Desulfovibrio vulgaris).